Reading from the N-terminus, the 781-residue chain is MKVTVDFEECLKDSPRFRAALEEVEGDVAELELKLDKLVKLCIAMIDTGKAFCLANKQFMNGIRDLAQYSCKDALVETNLTKFSDTLQEMINYHNILFDQTQRSIKAQLQTFVKEDIKKFKDAKKQFEKVSEEKENALVKNAQVQRNKQHEVEEATNILTATRKCFRHIALDYVLQINVLQSKRRSEILKSMLSFMYAHLTFFHQGYDLFSELGPYMKDLGAQLDQLAVDAAKEKRDMEQKHSTIQQKDYSGDDTKLEYNVDAANGIVMEGYLFKRASNAFKTWNRRWFSIQNNQLVYQKKFKDNPTVVVEDLRLCTVKHCEDIERRFCFEVVSPTKSCMLQADSEKLRQAWIKAVQTSIATAYREKGDESEKQEKKSSPSTGSLESGSETKEKLLKGESALQRVQCIPGNAACCDCGLADPRWASINLGITLCIECSGIHRSLGVHFSKVRSLTLDSWEPELLKLMCELGNDVINRIYEAKLEKMGVKKPQPGSQRQEKEMYIKAKYVERKFVEKQPAAAVSPLESRTKVLPQSQEEKRHSAPEKSFLAIEQGAASPRVRSSDSGIQQSVDDSREHLASTISANSLYEPEGEKQESSVFYDSRQLNPGLHLYRAAFEKNLPDMAEALAHGAEVNWVNMEENKATPLIQAVRGGSLVTCEFLLQNGANVNIRDMKGRGPLHHATVLGHTGQVCLFLKRGANQHATDEDGKDPLSIAVEAANADIVTLLRLARMNEEMRESEGLYGQPGDEIYQDIFRDFSQMASNNPEKLNRFQQSDSQKP.

A BAR domain is found at Met-1–Gln-226. Residues Gly-266–Ala-361 enclose the PH domain. The span at Arg-365–Ser-378 shows a compositional bias: basic and acidic residues. A disordered region spans residues Arg-365–Glu-390. A compositionally biased stretch (low complexity) spans Ser-379–Gly-388. The Arf-GAP domain occupies Glu-399 to Ala-521. The C4-type zinc finger occupies Cys-414–Cys-437. Residues Ala-520–Glu-576 form a disordered region. ANK repeat units follow at residues Asn-642–Ile-671, Lys-675–Ala-704, and Asp-708–Met-737.

The protein localises to the endosome membrane. It is found in the cell membrane. GAP activity stimulated by phosphatidylinositol 4,5-bisphosphate (PIP2) and phosphatidic acid. GTPase-activating protein (GAP) for ADP ribosylation factor 6 (ARF6). The polypeptide is Arf-GAP with coiled-coil, ANK repeat and PH domain-containing protein 2 (ACAP2) (Gallus gallus (Chicken)).